A 120-amino-acid polypeptide reads, in one-letter code: uncharacterized protein (120 aa).

This is an uncharacterized protein from Aquifex aeolicus (strain VF5).